A 973-amino-acid polypeptide reads, in one-letter code: MSSHHQILQIRSDPFVLSHCCRHTRLTSSLTLQSPLKQPFSCLPFRWRRSYRGGVRSSTTETHGSKKEALVSETATTSIELKRVYPFHEIEPKWQRYWEDNRIFRTPDDVDTSKPKFYVLDMFPYPSGAGLHVGHPLGYTATDILARLRRMQGYNVLHPMGWDAFGLPAEQYAIETGTHPKTTTLKNIDRFRLQLKSLGFSYDWDRELSTTEPDYYKWTQWIFLQLYKKGLAYQAEVPVNWCPALGTVLANEEVVDGVSERGGHPVIRKPMRQWMLKITAYADRLLEDLDELEWPESIKEMQRNWIGRSEGAELNFSILDGEGRETDKEITVYTTRPDTLFGATYMVVAPEHQLLSYFVTAEQKQQVEEYKDFASRKSDLERTELQKDKTGVFTGCYAKNPANGDAIPIWVADYVLASYGTGAIMAVPAHDTRDNEFALKYNIPIKWVVRNEANSSDDAKQVYPGLGIIENSSTLETGLDINQLSSKEAALKVIEWAERTGNGKKKVNYKLRDWLFARQRYWGEPIPILILDESGETIAISESELPLTLPELNDFTPTGTGEPPLSKAVSWVNTVDPSTGKPAKRETSTMPQWAGSCWYYLRFMDPKNPEALVDKEKEKYWSPVDVYVGGAEHAVLHLLYSRFWHKVLYDIGVVSTKEPFKCVINQGIILGEVQYTAWKDQEGNYVSADTEERLNEHQQVTIPEEKVIKSGDHFVLKEDPSIRLIPRVYKMSKSRGNVVNPDDVVLEYGADSLRLYEMFMGPFRDSKTWNTSGIEGVHRFLARTWRLVIGLPQSDGSFKDGTLVTDDEPTLEQLRTLHKCIAKVTEEIESTRFNTGISGMMEFVNAAYKWNNQPRGIIEPFVLLLSPYAPHMAEELWSRLGHPNSLAYESFPKANPDYLKNTTIVLPVQINGKTRGTIEVEEGCSEDDAFVLASQDDKLRKYLDGQSIKKRIYVPGKILNVILDRTNVKVTTK.

The 'HIGH' region motif lies at 126 to 135 (PSGAGLHVGH). The 'KMSKS' region motif lies at 730 to 734 (KMSKS). Residue Lys-733 coordinates ATP.

This sequence belongs to the class-I aminoacyl-tRNA synthetase family.

Its subcellular location is the plastid. The protein resides in the chloroplast. It is found in the mitochondrion. It catalyses the reaction tRNA(Leu) + L-leucine + ATP = L-leucyl-tRNA(Leu) + AMP + diphosphate. Functionally, catalyzes the specific attachment of an amino acid to its cognate tRNA in a two step reaction: the amino acid (AA) is first activated by ATP to form AA-AMP and then transferred to the acceptor end of the tRNA. The chain is Leucine--tRNA ligase, chloroplastic/mitochondrial from Arabidopsis thaliana (Mouse-ear cress).